A 284-amino-acid chain; its full sequence is 2-dehydro-3-deoxyphosphooctonate aldolase (284 aa).

It belongs to the KdsA family.

The protein localises to the cytoplasm. The catalysed reaction is D-arabinose 5-phosphate + phosphoenolpyruvate + H2O = 3-deoxy-alpha-D-manno-2-octulosonate-8-phosphate + phosphate. The protein operates within carbohydrate biosynthesis; 3-deoxy-D-manno-octulosonate biosynthesis; 3-deoxy-D-manno-octulosonate from D-ribulose 5-phosphate: step 2/3. It functions in the pathway bacterial outer membrane biogenesis; lipopolysaccharide biosynthesis. This is 2-dehydro-3-deoxyphosphooctonate aldolase from Mannheimia succiniciproducens (strain KCTC 0769BP / MBEL55E).